The sequence spans 331 residues: UPF0324 membrane protein SERP0111 (331 aa).

10 consecutive transmembrane segments (helical) span residues 7–26 (ASFMKGIMFTFTIAIISYIL), 31–48 (ILHTIGALAIAIIFAMIY), 69–88 (LLKFAIILYGLKLNMGDILG), 93–115 (LLLIDIIVIIFSISLTLLLNQII), 122–144 (SILLGIGTGVCGAAAIAATAPIL), 154–176 (SVGIIALVGTIFALIYTAIEAIF), 183–205 (YGAWTGISLHEIAQVVLAAGIGG), 249–271 (IPYFLIGFIIMACINTFVPIPSL), 275–297 (IINVITTLCMLMAMVALGLNIVL), and 308–330 (FIVICITSICLSGVTLLVTSIMF).

The protein belongs to the UPF0324 family.

It localises to the cell membrane. The chain is UPF0324 membrane protein SERP0111 from Staphylococcus epidermidis (strain ATCC 35984 / DSM 28319 / BCRC 17069 / CCUG 31568 / BM 3577 / RP62A).